The chain runs to 182 residues: dCTP deaminase, dUMP-forming (182 aa).

DCTP-binding positions include Arg-96–Arg-101, Asp-113, Thr-121–Glu-123, Gln-142, Tyr-156, and Gln-163. Glu-123 functions as the Proton donor/acceptor in the catalytic mechanism.

Belongs to the dCTP deaminase family. As to quaternary structure, homotrimer.

The enzyme catalyses dCTP + 2 H2O = dUMP + NH4(+) + diphosphate. Its pathway is pyrimidine metabolism; dUMP biosynthesis; dUMP from dCTP: step 1/1. Functionally, bifunctional enzyme that catalyzes both the deamination of dCTP to dUTP and the hydrolysis of dUTP to dUMP without releasing the toxic dUTP intermediate. The protein is dCTP deaminase, dUMP-forming of Halothermothrix orenii (strain H 168 / OCM 544 / DSM 9562).